The following is a 74-amino-acid chain: Peptide BmKa2 (74 aa).

An N-terminal signal peptide occupies residues 1 to 24; sequence MSSKTLLVLLLVGVLVSTFFTADA.

The protein belongs to the non-disulfide-bridged peptide (NDBP) superfamily. Long chain multifunctional peptide (group 2) family. In terms of tissue distribution, expressed by the venom gland.

Its subcellular location is the secreted. Functionally, highly acidic peptide that may have antibacterial activity. In Olivierus martensii (Manchurian scorpion), this protein is Peptide BmKa2.